The primary structure comprises 259 residues: Small ribosomal subunit protein uS2 (259 aa).

This sequence belongs to the universal ribosomal protein uS2 family.

The chain is Small ribosomal subunit protein uS2 from Streptococcus pneumoniae (strain CGSP14).